The following is a 224-amino-acid chain: Ras-related protein RABA4b (224 aa).

Position 2 is an N-acetylalanine (alanine 2). 24 to 31 (GDSAVGKS) contacts GTP. The short motif at 46–54 (SKATIGVEF) is the Effector region element. GTP contacts are provided by residues 72 to 76 (DTAGQ), 130 to 133 (NKSD), and 160 to 161 (SA). 2 S-geranylgeranyl cysteine lipidation sites follow: cysteine 220 and cysteine 221.

This sequence belongs to the small GTPase superfamily. Rab family. As to quaternary structure, interacts with TCTP1. As to expression, expressed in roots, stems, leaves and flowers. Expressed in tips of growing root hair cells.

Its subcellular location is the early endosome membrane. It localises to the golgi apparatus. The protein localises to the trans-Golgi network membrane. Its function is as follows. Regulator of membrane trafficking. May be required for secretion of cell wall components in cells. The sequence is that of Ras-related protein RABA4b from Arabidopsis thaliana (Mouse-ear cress).